The sequence spans 770 residues: MLPGLALLLLAAWTARALEVPTDGNAGLLAEPQIAMFCGRLNMHMNVQNGKWDSDPSGTKTCIDTKEGILQYCQEVYPELQITNVVEANQPVTIQNWCKRGRKQCKTHPHFVIPYRCLVGEFVSDALLVPDKCKFLHQERMDVCETHLHWHTVAKETCSEKSTNLHDYGMLLPCGIDKFRGVEFVCCPLAEESDNVDSADAEEDDSDVWWGGADTDYADGSEDKVVEVAEEEEVAEVEEEEADDDEDDEDGDEVEEEAEEPYEEATERTTSIATTTTTTTESVEEVVREVCSEQAETGPCRAMISRWYFDVTEGKCAPFFYGGCGGNRNNFDTEEYCMAVCGSVMSQSLRKTTREPLTRDPVKLPTTAASTPDAVDKYLETPGDENEHAHFQKAKERLEAKHRERMSQVMREWEEAERQAKNLPKADKKAVIQHFQEKVESLEQEAANERQQLVETHMARVEAMLNDRRRLALENYITALQAVPPRPRHVFNMLKKYVRAEQKDRQHTLKHFEHVRMVDPKKAAQIRSQVMTHLRVIYERMNQSLSLLYNVPAVAEEIQDEVDELLQKEQNYSDDVLANMISEPRISYGNDALMPSLTETKTTVELLPVNGEFSLDDLQPWHSFGADSVPANTENEVEPVDARPAADRGLTTRPGSGLTNIKTEEISEVKMDAEFRHDSGYEVHHQKLVFFAEDVGSNKGAIIGLMVGGVVIATVIVITLVMLKKKQYTSIHHGVVEVDAAVTPEERHLSKMQQNGYENPTYKFFEQMQN.

The first 17 residues, 1-17, serve as a signal peptide directing secretion; it reads MLPGLALLLLAAWTARA. The Extracellular segment spans residues 18 to 701; that stretch reads LEVPTDGNAG…AEDVGSNKGA (684 aa). Positions 28-123 are GFLD subdomain; that stretch reads LLAEPQIAMF…PYRCLVGEFV (96 aa). Positions 28-189 constitute an E1 domain; sequence LLAEPQIAMF…RGVEFVCCPL (162 aa). 6 disulfide bridges follow: Cys-38/Cys-62, Cys-73/Cys-117, Cys-98/Cys-105, Cys-133/Cys-187, Cys-144/Cys-174, and Cys-158/Cys-186. 96–110 is a heparin binding site; it reads NWCKRGRKQCKTHPH. The tract at residues 131-189 is cuBD subdomain; sequence DKCKFLHQERMDVCETHLHWHTVAKETCSEKSTNLHDYGMLLPCGIDKFRGVEFVCCPL. Residues His-147, His-151, and Tyr-168 each coordinate Cu(2+). Residues 181–188 are zinc-binding; it reads GVEFVCCP. Zn(2+)-binding residues include Glu-183, Cys-186, and Cys-187. The segment covering 194-207 has biased composition (acidic residues); that stretch reads DNVDSADAEEDDSD. The segment at 194–284 is disordered; it reads DNVDSADAEE…TTTTTTESVE (91 aa). Ser-198 is modified (phosphoserine; by CK2). Residue Ser-206 is modified to Phosphoserine; by CK1. 2 positions are modified to sulfotyrosine: Tyr-217 and Tyr-262. Over residues 228 to 264 the composition is skewed to acidic residues; the sequence is VAEEEEVAEVEEEEADDDEDDEDGDEVEEEAEEPYEE. Positions 268–281 are enriched in low complexity; sequence RTTSIATTTTTTTE. 3 cysteine pairs are disulfide-bonded: Cys-291-Cys-341, Cys-300-Cys-324, and Cys-316-Cys-337. The BPTI/Kunitz inhibitor domain occupies 291–341; that stretch reads CSEQAETGPCRAMISRWYFDVTEGKCAPFFYGGCGGNRNNFDTEEYCMAVC. Sulfotyrosine is present on Tyr-336. The OX-2 motif lies at 344–365; it reads VMSQSLRKTTREPLTRDPVKLP. In terms of domain architecture, E2 spans 374 to 565; it reads AVDKYLETPG…EEIQDEVDEL (192 aa). Residues 391–423 are heparin-binding; sequence FQKAKERLEAKHRERMSQVMREWEEAERQAKNL. The residue at position 441 (Ser-441) is a Phosphoserine. The interval 491 to 522 is heparin-binding; the sequence is FNMLKKYVRAEQKDRQHTLKHFEHVRMVDPKK. Tyr-497 is subject to Phosphotyrosine. The interval 523–540 is collagen-binding; sequence AAQIRSQVMTHLRVIYER. Residues Asn-542 and Asn-571 are each glycosylated (N-linked (GlcNAc...) asparagine). 4 residues coordinate Cu(2+): His-677, Tyr-681, His-684, and His-685. His-677, Tyr-681, His-684, and His-685 together coordinate Zn(2+). Residues 695 to 722 form an interaction with PSEN1 region; that stretch reads VGSNKGAIIGLMVGGVVIATVIVITLVM. Residues 702-722 traverse the membrane as a helical segment; sequence IIGLMVGGVVIATVIVITLVM. Topologically, residues 723 to 770 are cytoplasmic; it reads LKKKQYTSIHHGVVEVDAAVTPEERHLSKMQQNGYENPTYKFFEQMQN. The short motif at 724–734 is the Basolateral sorting signal element; the sequence is KKKQYTSIHHG. The residue at position 729 (Thr-729) is a Phosphothreonine. Ser-730 carries the post-translational modification Phosphoserine; by APP-kinase I. Residues 732-751 are interaction with G(o)-alpha; the sequence is HHGVVEVDAAVTPEERHLSK. Thr-743 is modified (phosphothreonine; by CDK5 and MAPK10). The interval 756–770 is required for the interaction with KIF5B and for anterograde transport in axons; it reads GYENPTYKFFEQMQN. Position 757 is a phosphotyrosine; by ABL1 (Tyr-757). Positions 757 to 762 match the YENPXY motif; contains endocytosis signal motif; it reads YENPTY. Residue Lys-763 forms a Glycyl lysine isopeptide (Lys-Gly) (interchain with G-Cter in ubiquitin) linkage.

Belongs to the APP family. Binds, via its C-terminus, to the PID domain of several cytoplasmic proteins, including APBB family members, the APBA family, MAPK8IP1, SHC1 and NUMB and DAB1. Binding to DAB1 inhibits its serine phosphorylation. Interacts (via NPXY motif) with DAB2 (via PID domain); the interaction is impaired by tyrosine phosphorylation of the NPXY motif. Also interacts with GPCR-like protein BPP, APPBP1, IB1, KNS2 (via its TPR domains), APPBP2 (via BaSS) and DDB1. In vitro, it binds MAPT via the MT-binding domains. Associates with microtubules in the presence of ATP and in a kinesin-dependent manner. Interacts, through a C-terminal domain, with GNAO1. Amyloid-beta protein 42 binds CHRNA7 in hippocampal neurons. Amyloid-beta associates with HADH2. Interacts with CPEB1, ANKS1B and AGER. Interacts with ITM2B. Interacts with ITM2C. Interacts with IDE. Can form homodimers; dimerization is enhanced in the presence of Cu(2+) ions. Can form homodimers; this is promoted by heparin binding. Amyloid-beta protein 40 interacts with S100A9. CTF-alpha product of APP interacts with GSAP. Isoform APP695 interacts with SORL1 (via N-terminal ectodomain); this interaction retains APP in the trans-Golgi network and reduces processing into soluble APP-alpha and amyloid-beta peptides. Isoform APP770 interacts with SORL1. The C99 fragment also interacts with SORL1. Interacts with PLD3. Interacts with VDAC1. Interacts with NSG1; could regulate APP processing. Amyloid-beta protein 42 interacts with FPR2. Interacts (via transmembrane region) with PSEN1; the interaction is direct. Interacts with LRRK2. Interacts (via cytoplasmic domain) with KIF5B. Interacts (via C-terminus) with APBB2/FE65L1 (via C-terminus). Interacts (via intracellular domain) with APBB3. In terms of processing, proteolytically processed under normal cellular conditions. Cleavage either by alpha-secretase, beta-secretase or theta-secretase leads to generation and extracellular release of soluble APP peptides, S-APP-alpha and S-APP-beta, and the retention of corresponding membrane-anchored C-terminal fragments, C80, C83 and C99. Subsequent processing of C80 and C83 by gamma-secretase yields P3 peptides. This is the major secretory pathway and is non-amyloidogenic. Alternatively, presenilin/nicastrin-mediated gamma-secretase processing of C99 releases the amyloid-beta proteins, amyloid-beta protein 40 and amyloid-beta protein 42, major components of amyloid plaques, and the cytotoxic C-terminal fragments, gamma-CTF(50), gamma-CTF(57) and gamma-CTF(59). PSEN1 cleavage is more efficient with C83 than with C99 as substrate (in vitro). Amyloid-beta protein 40 and Amyloid-beta protein 42 are cleaved by ACE. Many other minor amyloid-beta peptides, amyloid-beta 1-X peptides, are found in cerebral spinal fluid (CSF) including the amyloid-beta X-15 peptides, produced from the cleavage by alpha-secretase. Proteolytically cleaved by caspases during neuronal apoptosis. Cleavage at Asp-739 by either caspase-3, -8 or -9 results in the production of the neurotoxic C31 peptide and the increased production of amyloid-beta peptides. Post-translationally, N- and O-glycosylated. In terms of processing, phosphorylation in the C-terminal on tyrosine, threonine and serine residues is neuron-specific. Phosphorylation can affect APP processing, neuronal differentiation and interaction with other proteins. Phosphorylated on Thr-743 in neuronal cells by Cdc5 kinase and Mapk10, in dividing cells by Cdc2 kinase in a cell-cycle dependent manner with maximal levels at the G2/M phase and, in vitro, by GSK-3-beta. The Thr-743 phosphorylated form causes a conformational change which reduces binding of Fe65 family members. In dopaminergic (DA) neurons, phosphorylation on Thr-743 by LRKK2 promotes the production and the nuclear translocation of the APP intracellular domain (AICD) which induces DA neuron apoptosis. Phosphorylation on Tyr-757 is required for SHC binding. Phosphorylated in the extracellular domain by casein kinases on both soluble and membrane-bound APP. This phosphorylation is inhibited by heparin. Trophic-factor deprivation triggers the cleavage of surface APP by beta-secretase to release sAPP-beta which is further cleaved to release an N-terminal fragment of APP (N-APP). Post-translationally, amyloid-beta peptides are degraded by IDE. In terms of processing, sulfated on tyrosine residues.

It localises to the cell membrane. Its subcellular location is the membrane. The protein resides in the perikaryon. It is found in the cell projection. The protein localises to the growth cone. It localises to the clathrin-coated pit. Its subcellular location is the early endosome. The protein resides in the cytoplasmic vesicle. It is found in the endoplasmic reticulum. The protein localises to the golgi apparatus. It localises to the secreted. Its subcellular location is the cell surface. The protein resides in the nucleus. It is found in the cytoplasm. Functions as a cell surface receptor and performs physiological functions on the surface of neurons relevant to neurite growth, neuronal adhesion and axonogenesis. Interaction between APP molecules on neighboring cells promotes synaptogenesis. Involved in cell mobility and transcription regulation through protein-protein interactions. Can promote transcription activation through binding to APBB1-KAT5 and inhibit Notch signaling through interaction with Numb. Couples to apoptosis-inducing pathways such as those mediated by G(o) and JIP. Inhibits G(o)-alpha ATPase activity. Acts as a kinesin I membrane receptor, mediating the axonal transport of beta-secretase and presenilin 1. By acting as a kinesin I membrane receptor, plays a role in axonal anterograde transport of cargo towards synapses in axons. May be involved in copper homeostasis/oxidative stress through copper ion reduction. In vitro, copper-metallated APP induces neuronal death directly or is potentiated through Cu(2+)-mediated low-density lipoprotein oxidation. Can regulate neurite outgrowth through binding to components of the extracellular matrix such as heparin and collagen I and IV. Induces a AGER-dependent pathway that involves activation of p38 MAPK, resulting in internalization of amyloid-beta peptide and mitochondrial dysfunction in cultured cortical neurons. Provides Cu(2+) ions for GPC1 which are required for release of nitric oxide (NO) and subsequent degradation of the heparan sulfate chains on GPC1. In terms of biological role, amyloid-beta peptides are lipophilic metal chelators with metal-reducing activity. Binds transient metals such as copper, zinc and iron. Its function is as follows. The gamma-CTF peptides as well as the caspase-cleaved peptides, including C31, are potent enhancers of neuronal apoptosis. In Macaca fascicularis (Crab-eating macaque), this protein is Amyloid-beta precursor protein.